The primary structure comprises 189 residues: Tetratricopeptide repeat protein 36 (189 aa).

3 TPR repeats span residues 51–84 (SKALELQGVMAAEAGDLSTALERFGQAICLLPER), 86–118 (SAYNNRAQARRLQGDVAGALEDLERAVELSGGR), and 123–156 (RQSFVQRGLLARLQGRDDDARRDFERAARLGSPF).

The protein belongs to the TTC36 family.

This Homo sapiens (Human) protein is Tetratricopeptide repeat protein 36 (TTC36).